Here is a 108-residue protein sequence, read N- to C-terminus: Small proline-rich protein 5 (108 aa).

Low complexity predominate over residues 1-13 (MSQQKQKQCAPPQ). Disordered regions lie at residues 1 to 24 (MSQQ…QRCP) and 73 to 108 (PPPQ…SKQK). Pro residues-rich tracts occupy residues 14-24 (QCCPPPQQRCP) and 73-100 (PPPQ…PPPQ).

Positively regulates keratinocyte differentiation by inducing genes associated with epidermal differentiation. This is Small proline-rich protein 5 from Homo sapiens (Human).